The chain runs to 147 residues: Hemoglobin subunit epsilon-2 (147 aa).

A Globin domain is found at 3–147 (HFTTEENVAV…VANALTHKYH (145 aa)). Heme b-binding residues include Tyr-64 and His-93.

It belongs to the globin family. In terms of tissue distribution, red blood cells.

In terms of biological role, hemoglobin epsilon chain is a beta-type chain found in early embryos. The polypeptide is Hemoglobin subunit epsilon-2 (HBE2) (Bos taurus (Bovine)).